A 466-amino-acid chain; its full sequence is MPHSYDYDAIVIGSGPGGEGAAMGLVKQGARVAVIERYQNVGGGCTHWGTIPSKALRHAVSRIIEFNQNPLYSDHSRLLRSSFADILNHADNVINQQTRMRQGFYERNHCEILQGNARFVDEHTLALDCPDGSVETLTAEKFIIACGSRPYHPTDVDFTHPRIYDSDSILSMHHEPRHVLIYGAGVIGCEYASIFRGMDVKVDLINTRDRLLAFLDQEMSDSLSYHFWNSGVVIRHNEEYEKIEGCDDGVIMHLKSGKKLKADCLLYANGRTGNTDSLALQNIGLETDSRGQLKVNSMYQTAQPHVYAVGDVIGYPSLASAAYDQGRIAAQALVKGEATAHLIEDIPTGIYTIPEISSVGKTEQQLTAMKVPYEVGRAQFKHLARAQIVGMNVGTLKILFHRETKEILGIHCFGERAAEIIHIGQAIMEQKGGGNTIEYFVNTTFNYPTMAEAYRVAALNGLNRLF.

36-45 contributes to the FAD binding site; it reads ERYQNVGGGC.

This sequence belongs to the class-I pyridine nucleotide-disulfide oxidoreductase family. FAD is required as a cofactor.

The protein resides in the cytoplasm. It carries out the reaction NAD(+) + NADPH = NADH + NADP(+). Its function is as follows. Conversion of NADPH, generated by peripheral catabolic pathways, to NADH, which can enter the respiratory chain for energy generation. The chain is Soluble pyridine nucleotide transhydrogenase from Escherichia coli O9:H4 (strain HS).